We begin with the raw amino-acid sequence, 323 residues long: 1-aminocyclopropane-1-carboxylate oxidase 4 (323 aa).

Met1 carries the N-acetylmethionine modification. The region spanning 153 to 254 (PTFGTKVSNY…RMSIASFYNP (102 aa)) is the Fe2OG dioxygenase domain. Fe cation-binding residues include His177, Asp179, and His234. Residue Arg245 participates in 2-oxoglutarate binding.

The protein belongs to the iron/ascorbate-dependent oxidoreductase family. Fe cation serves as cofactor. As to expression, expressed in vegetative tissues. Expressed constitutively at a low level in leaves and blades.

It carries out the reaction 1-aminocyclopropane-1-carboxylate + L-ascorbate + O2 = ethene + L-dehydroascorbate + hydrogen cyanide + CO2 + 2 H2O. Its pathway is alkene biosynthesis; ethylene biosynthesis via S-adenosyl-L-methionine; ethylene from S-adenosyl-L-methionine: step 2/2. Functionally, enzyme involved in the ethylene biosynthesis. May promote stem elongation by maximizing the extensibility cells, possibly by activating ethylene biosynthesis, in response to very-long-chain fatty acids (VLCFAs C20:0 to C30:0). The chain is 1-aminocyclopropane-1-carboxylate oxidase 4 (ACO4) from Arabidopsis thaliana (Mouse-ear cress).